We begin with the raw amino-acid sequence, 264 residues long: MATTATEATKTTAPAQEQQANGNGNGEQKTRHSEVGHKSLLKSDDLYQYILDTSVYPREPESMKELREITAKHPWNLMTTSADEGQFLNMLIKLIGAKKTMEIGVYTGYSLLATALALPEDGTILAMDINRENYELGLPCINKAGVGHKIDFREGPALPVLDDLVADKEQHGSFDFAFVDADKDNYLNYHERLLKLVRPGGLIGYDNTLWNGSVVLPDDAPMRKYIRFYRDFVLALNSALAADDRVEICQLPVGDGVTLCRRVK.

The span at 1–20 shows a compositional bias: low complexity; that stretch reads MATTATEATKTTAPAQEQQA. A disordered region spans residues 1–37; sequence MATTATEATKTTAPAQEQQANGNGNGEQKTRHSEVGH. Over residues 28–37 the composition is skewed to basic and acidic residues; that stretch reads QKTRHSEVGH. K38 is a substrate binding site. Residues T80, E102, 104–105, S110, D128, and A157 each bind S-adenosyl-L-methionine; that span reads GV. A substrate-binding site is contributed by D180. D180 serves as a coordination point for a divalent metal cation. D182 contacts S-adenosyl-L-methionine. A divalent metal cation-binding residues include D206 and N207. A substrate-binding site is contributed by N211.

It belongs to the class I-like SAM-binding methyltransferase superfamily. Cation-dependent O-methyltransferase family. CCoAMT subfamily. A divalent metal cation is required as a cofactor.

It carries out the reaction (E)-caffeoyl-CoA + S-adenosyl-L-methionine = (E)-feruloyl-CoA + S-adenosyl-L-homocysteine + H(+). It functions in the pathway aromatic compound metabolism; phenylpropanoid biosynthesis. Functionally, methylates caffeoyl-CoA to feruloyl-CoA and 5-hydroxyferuloyl-CoA to sinapoyl-CoA. Plays a role in the synthesis of feruloylated polysaccharides. Involved in the reinforcement of the plant cell wall. Also involved in the responding to wounding or pathogen challenge by the increased formation of cell wall-bound ferulic acid polymers. The sequence is that of Caffeoyl-CoA O-methyltransferase 2 (CCOAOMT2) from Zea mays (Maize).